A 140-amino-acid polypeptide reads, in one-letter code: Large ribosomal subunit protein uL16 (140 aa).

A compositionally biased stretch (basic residues) spans 1–14 (MLMPKKVKHRKQMK). The interval 1-20 (MLMPKKVKHRKQMKGRMSGT) is disordered.

It belongs to the universal ribosomal protein uL16 family. Part of the 50S ribosomal subunit.

Binds 23S rRNA and is also seen to make contacts with the A and possibly P site tRNAs. This chain is Large ribosomal subunit protein uL16, found in Geotalea daltonii (strain DSM 22248 / JCM 15807 / FRC-32) (Geobacter daltonii).